The chain runs to 332 residues: Anthranilate phosphoribosyltransferase (332 aa).

Residues Gly79, 82–83 (GD), Ser87, 89–92 (NIST), 107–115 (KHGNRSVSS), and Ser119 each bind 5-phospho-alpha-D-ribose 1-diphosphate. An anthranilate-binding site is contributed by Gly79. Ser91 contributes to the Mg(2+) binding site. Asn110 serves as a coordination point for anthranilate. Arg165 is a binding site for anthranilate. Positions 223 and 224 each coordinate Mg(2+).

This sequence belongs to the anthranilate phosphoribosyltransferase family. In terms of assembly, homodimer. Mg(2+) is required as a cofactor.

It carries out the reaction N-(5-phospho-beta-D-ribosyl)anthranilate + diphosphate = 5-phospho-alpha-D-ribose 1-diphosphate + anthranilate. It functions in the pathway amino-acid biosynthesis; L-tryptophan biosynthesis; L-tryptophan from chorismate: step 2/5. Catalyzes the transfer of the phosphoribosyl group of 5-phosphorylribose-1-pyrophosphate (PRPP) to anthranilate to yield N-(5'-phosphoribosyl)-anthranilate (PRA). The protein is Anthranilate phosphoribosyltransferase of Photorhabdus laumondii subsp. laumondii (strain DSM 15139 / CIP 105565 / TT01) (Photorhabdus luminescens subsp. laumondii).